A 1061-amino-acid chain; its full sequence is Lysine-specific demethylase jmjd-3.1 (1061 aa).

Disordered regions lie at residues 30 to 49 (VKNS…MRPV) and 256 to 417 (KSLS…KRRT). The span at 271-287 (QHTNSVGSSIGTTSGDS) shows a compositional bias: polar residues. Positions 310–320 (STSSEFTETTS) are enriched in low complexity. Polar residues predominate over residues 321–330 (VANQTESNAG). The interval 369–417 (KKKEQSATEPPIPRTKRAYTKNPNTIRKRRMKKNQSDDEEDDGPPKRRT) is required for nuclear localization. The segment at 418 to 759 (INYQIEFRDA…FGTNIDLLSE (342 aa)) is required for binding of unc-3 and for function in Y-to-PDA transdifferentiation. The JmjC domain occupies 760-923 (NFKKQMNEIE…LATSIVAHDH (164 aa)). Residues His811, Glu813, and His891 each coordinate Fe cation. The Zn(2+) site is built by Cys998, Cys1001, Cys1025, and Cys1028.

The protein belongs to the UTX family. Interacts with wdr-5.1 and unc-3. Requires Fe(2+) as cofactor. In terms of tissue distribution, mainly expressed in head and tail.

The protein resides in the nucleus. Functionally, histone demethylase that specifically demethylates trimethylated 'Lys-27' of histone H3, a mark associated with transcriptional repression, thereby playing a central role in the histone code. Involved in the transcriptional regulation of the heat shock response, unfolded protein response and possibly other stress response target genes. Required for gonad development and organization. Required for the robust transdifferentiation of the Y rectal epithelial cell to the PDA motor neuron during larval development. Acts cell-autonomously in Y-to-PDA transdifferentiation, which depends on the demethylase activity and on recognition of the H3 tail. Cooperates with set-2 and unc-3 to ensure robust Y-to-PDA transdifferentiation. Promotes mitochondrial stress-induced longevity. Involved in lifespan regulation. This Caenorhabditis elegans protein is Lysine-specific demethylase jmjd-3.1.